We begin with the raw amino-acid sequence, 346 residues long: N-acetyl-gamma-glutamyl-phosphate reductase (346 aa).

Cysteine 150 is a catalytic residue.

Belongs to the NAGSA dehydrogenase family. Type 1 subfamily.

It is found in the cytoplasm. The enzyme catalyses N-acetyl-L-glutamate 5-semialdehyde + phosphate + NADP(+) = N-acetyl-L-glutamyl 5-phosphate + NADPH + H(+). The protein operates within amino-acid biosynthesis; L-arginine biosynthesis; N(2)-acetyl-L-ornithine from L-glutamate: step 3/4. Functionally, catalyzes the NADPH-dependent reduction of N-acetyl-5-glutamyl phosphate to yield N-acetyl-L-glutamate 5-semialdehyde. This chain is N-acetyl-gamma-glutamyl-phosphate reductase, found in Moorella thermoacetica (strain ATCC 39073 / JCM 9320).